Here is a 211-residue protein sequence, read N- to C-terminus: Uracil phosphoribosyltransferase (211 aa).

5-phospho-alpha-D-ribose 1-diphosphate is bound by residues Arg78, Arg103, and 130-138 (DPMLATGGT). Uracil is bound by residues Ile196 and 201 to 203 (GDA). Asp202 contacts 5-phospho-alpha-D-ribose 1-diphosphate.

The protein belongs to the UPRTase family. It depends on Mg(2+) as a cofactor.

The catalysed reaction is UMP + diphosphate = 5-phospho-alpha-D-ribose 1-diphosphate + uracil. Its pathway is pyrimidine metabolism; UMP biosynthesis via salvage pathway; UMP from uracil: step 1/1. Allosterically activated by GTP. Catalyzes the conversion of uracil and 5-phospho-alpha-D-ribose 1-diphosphate (PRPP) to UMP and diphosphate. The polypeptide is Uracil phosphoribosyltransferase (Kineococcus radiotolerans (strain ATCC BAA-149 / DSM 14245 / SRS30216)).